We begin with the raw amino-acid sequence, 340 residues long: Very-long-chain 3-oxoacyl-CoA reductase (340 aa).

Residues leucine 23–valine 43 traverse the membrane as a helical segment. NADP(+) is bound by residues valine 68, arginine 109, aspartate 123, aspartate 131, asparagine 150, lysine 185, tyrosine 217, lysine 221, valine 250, and threonine 252. Catalysis depends on tyrosine 217, which acts as the Proton donor. Lysine 221 acts as the Lowers pKa of active site Tyr in catalysis.

This sequence belongs to the short-chain dehydrogenases/reductases (SDR) family.

The protein localises to the endoplasmic reticulum membrane. It catalyses the reaction a very-long-chain (3R)-3-hydroxyacyl-CoA + NADP(+) = a very-long-chain 3-oxoacyl-CoA + NADPH + H(+). Its pathway is lipid metabolism; fatty acid biosynthesis. In terms of biological role, component of the microsomal membrane bound fatty acid elongation system, which produces the 26-carbon very long-chain fatty acids (VLCFA) from palmitate. Catalyzes the reduction of the 3-ketoacyl-CoA intermediate that is formed in each cycle of fatty acid elongation. VLCFAs serve as precursors for ceramide and sphingolipids. The chain is Very-long-chain 3-oxoacyl-CoA reductase from Podospora anserina (strain S / ATCC MYA-4624 / DSM 980 / FGSC 10383) (Pleurage anserina).